Consider the following 319-residue polypeptide: Cobalamin biosynthesis protein CobD (319 aa).

3 helical membrane-spanning segments follow: residues 54-76 (VLLL…WLSY), 154-173 (GVTA…ALLY), and 301-318 (VLGF…IYAI).

The protein belongs to the CobD/CbiB family.

It is found in the cell membrane. It participates in cofactor biosynthesis; adenosylcobalamin biosynthesis. Converts cobyric acid to cobinamide by the addition of aminopropanol on the F carboxylic group. The polypeptide is Cobalamin biosynthesis protein CobD (Halalkalibacterium halodurans (strain ATCC BAA-125 / DSM 18197 / FERM 7344 / JCM 9153 / C-125) (Bacillus halodurans)).